The following is a 91-amino-acid chain: Small ribosomal subunit protein uS19 (91 aa).

Belongs to the universal ribosomal protein uS19 family.

Protein S19 forms a complex with S13 that binds strongly to the 16S ribosomal RNA. In Neorickettsia sennetsu (strain ATCC VR-367 / Miyayama) (Ehrlichia sennetsu), this protein is Small ribosomal subunit protein uS19.